We begin with the raw amino-acid sequence, 202 residues long: Probable GTP-binding protein EngB (202 aa).

Residues 30-201 (NILQIALAGR…WERIQYTIDS (172 aa)) enclose the EngB-type G domain. GTP contacts are provided by residues 38 to 45 (GRSNVGKS), 65 to 69 (GKTRS), 84 to 87 (DLPG), 151 to 154 (TKID), and 180 to 182 (VSS). Residues Ser-45 and Thr-67 each contribute to the Mg(2+) site.

This sequence belongs to the TRAFAC class TrmE-Era-EngA-EngB-Septin-like GTPase superfamily. EngB GTPase family. The cofactor is Mg(2+).

In terms of biological role, necessary for normal cell division and for the maintenance of normal septation. The sequence is that of Probable GTP-binding protein EngB from Lawsonia intracellularis (strain PHE/MN1-00).